The sequence spans 110 residues: Nucleoid-associated protein ESA_02800 (110 aa).

A disordered region spans residues 89 to 110 (QKEKMASVSSGMQLPPGFKMPF).

Belongs to the YbaB/EbfC family. As to quaternary structure, homodimer.

It is found in the cytoplasm. It localises to the nucleoid. In terms of biological role, binds to DNA and alters its conformation. May be involved in regulation of gene expression, nucleoid organization and DNA protection. This is Nucleoid-associated protein ESA_02800 from Cronobacter sakazakii (strain ATCC BAA-894) (Enterobacter sakazakii).